We begin with the raw amino-acid sequence, 258 residues long: Tryptophan synthase alpha chain (258 aa).

Active-site proton acceptor residues include E52 and D63.

Belongs to the TrpA family. As to quaternary structure, tetramer of two alpha and two beta chains.

It carries out the reaction (1S,2R)-1-C-(indol-3-yl)glycerol 3-phosphate + L-serine = D-glyceraldehyde 3-phosphate + L-tryptophan + H2O. The protein operates within amino-acid biosynthesis; L-tryptophan biosynthesis; L-tryptophan from chorismate: step 5/5. Its function is as follows. The alpha subunit is responsible for the aldol cleavage of indoleglycerol phosphate to indole and glyceraldehyde 3-phosphate. This chain is Tryptophan synthase alpha chain, found in Streptococcus pneumoniae serotype 4 (strain ATCC BAA-334 / TIGR4).